The following is a 584-amino-acid chain: Complement component C8 alpha chain (584 aa).

Positions 1-20 (MFAVVFFILSLMTCQPGVTA) are cleaved as a signal peptide. Residues 21-30 (QEKVNQRVRR) constitute a propeptide that is removed on maturation. Positions 38 to 91 (TCQLSNWSEWTDCFPCQDKKYRHRSLLQPNKFGGTICSGDIWDQASCSSSTTCV) constitute a TSP type-1 1 domain. Intrachain disulfides connect cysteine 39–cysteine 74, cysteine 50–cysteine 84, cysteine 53–cysteine 90, cysteine 96–cysteine 108, cysteine 102–cysteine 121, cysteine 115–cysteine 130, and cysteine 140–cysteine 177. A C-linked (Man) tryptophan glycan is attached at tryptophan 44. The region spanning 94-132 (AQCGQDFQCKETGRCLKRHLVCNGDQDCLDGSDEDDCED) is the LDL-receptor class A domain. The Ca(2+) site is built by leucine 113, asparagine 116, aspartate 118, aspartate 120, aspartate 126, and glutamate 127. The region spanning 135–498 (AIDEDCSQYE…QYLMEFNACR (364 aa)) is the MACPF domain. 4 consecutive transmembrane segments (beta stranded) span residues 248 to 256 (FGVTIGIGP), 259 to 266 (SPLLVGVG), 377 to 384 (GGSLGIQY), and 390 to 395 (VGGGLS). A disulfide bridge connects residues cysteine 375 and cysteine 399. Residue asparagine 437 is glycosylated (N-linked (GlcNAc...) asparagine). 4 disulfide bridges follow: cysteine 497-cysteine 544, cysteine 499-cysteine 515, cysteine 502-cysteine 517, and cysteine 519-cysteine 528. Positions 499 to 529 (CGPCFNNGVPILEGTSCRCQCRLGSLGAACE) constitute an EGF-like domain. The TSP type-1 2 domain occupies 539-583 (DGSWSCWSSWSVCRAGIQERRRECDNPAPQNGGASCPGRKVQTQA). 3 C-linked (Man) tryptophan glycosylation sites follow: tryptophan 542, tryptophan 545, and tryptophan 548. Disulfide bonds link cysteine 551–cysteine 584 and cysteine 562–cysteine 574. The tract at residues 562-584 (CDNPAPQNGGASCPGRKVQTQAC) is disordered.

This sequence belongs to the complement C6/C7/C8/C9 family. Heterotrimer of 3 chains: alpha (C8A), beta (C8B) and gamma (C8G); the alpha and gamma chains are disulfide bonded. Component of the membrane attack complex (MAC), composed of complement C5b, C6, C7, C8A, C8B, C8G and multiple copies of the pore-forming subunit C9.

The protein resides in the secreted. It localises to the target cell membrane. Its activity is regulated as follows. Membrane attack complex (MAC) assembly is inhibited by CD59, thereby protecting self-cells from damage during complement activation. CD59 acts by binding to the beta-haipins of C8 (C8A and C8B), forming an intermolecular beta-sheet that prevents incorporation of the multiple copies of C9 required for complete formation of the osmolytic pore. MAC assembly is also inhibited by clusterin (CLU) chaperones that inhibit polymerization of C9. In terms of biological role, component of the membrane attack complex (MAC), a multiprotein complex activated by the complement cascade, which inserts into a target cell membrane and forms a pore, leading to target cell membrane rupture and cell lysis. The MAC is initiated by proteolytic cleavage of C5 into complement C5b in response to the classical, alternative, lectin and GZMK complement pathways. The complement pathways consist in a cascade of proteins that leads to phagocytosis and breakdown of pathogens and signaling that strengthens the adaptive immune system. C8A, together with C8B and C8G, inserts into the target membrane, but does not form pores by itself. During MAC assembly, associates with C5b, C6 and C7 to form the C5b8 intermediate complex that inserts into the target membrane and traverses the bilayer increasing membrane rigidity. This Homo sapiens (Human) protein is Complement component C8 alpha chain.